The sequence spans 319 residues: HTH-type transcriptional regulator YidZ (319 aa).

The HTH lysR-type domain occupies 8-65; it reads LDLNLLLCLQLLMQERSVTKAAKRMNVTPSAVSKSLSKLRTWFDDPLFVNTPLGLTPT. Residues 25–44 constitute a DNA-binding region (H-T-H motif); sequence VTKAAKRMNVTPSAVSKSLS.

This sequence belongs to the LysR transcriptional regulatory family.

Functionally, involved in anaerobic NO protection. The protein is HTH-type transcriptional regulator YidZ of Citrobacter koseri (strain ATCC BAA-895 / CDC 4225-83 / SGSC4696).